Consider the following 473-residue polypeptide: Phosphatidylserine synthase 1 (473 aa).

Ala2 is subject to N-acetylalanine. Residues 2-35 (ASCVGSRTLSKDDVNYKMHFRMINEQQVEDITID) lie on the Cytoplasmic side of the membrane. A helical transmembrane segment spans residues 36–56 (FFYRPHTITLLSFTIVSLMYF). Residues 57–72 (AFTRDDSVPEDNIWRG) are Lumenal-facing. The helical transmembrane segment at 73–93 (ILSVIFFFLIISVLAFPNGPF) threads the bilayer. At 94-102 (TRPHPALWR) the chain is on the cytoplasmic side. The chain crosses the membrane as a helical span at residues 103-123 (MVFGLSVLYFLFLVFLLFLNF). The Lumenal segment spans residues 124–186 (EQVKSLMYWL…AMKALLIRSY (63 aa)). The helical transmembrane segment at 187-207 (GLCWTISITWELTELFFMHLL) threads the bilayer. Topologically, residues 208–216 (PNFAECWWD) are cytoplasmic. Residues 217–237 (QVILDILLCNGGGIWLGMVVC) form a helical membrane-spanning segment. The Lumenal segment spans residues 238–286 (RFLEMRTYHWASFKDIHTTTGKIKRAVLQFTPASWTYVRWFDPKSSFQR). A helical membrane pass occupies residues 287–307 (VAGVYLFMIIWQLTELNTFFL). Over 308-319 (KHIFVFQASHPL) the chain is Cytoplasmic. A helical membrane pass occupies residues 320–342 (SWGRILFIGGITAPTVRQYYAYL). Topologically, residues 343-355 (TDTQCKRVGTQCW) are lumenal. Residues 356–376 (VFGVIGFLEAIVCIKFGQDLF) form a helical membrane-spanning segment. At 377 to 383 (SKTQILY) the chain is on the cytoplasmic side. A helical membrane pass occupies residues 384 to 404 (VVLWLLCVAFTTFLCLYGMIW). Residues 405 to 473 (YAEHYGHREK…SKVTNGVGKK (69 aa)) are Lumenal-facing. Residues Ser417, Ser425, Ser442, and Ser454 each carry the phosphoserine modification. The tract at residues 430-473 (WHHRKGTKGSEDSPPKHAGNNESHSSRRRNRHSKSKVTNGVGKK) is disordered. Residues 455–464 (SRRRNRHSKS) show a composition bias toward basic residues.

Belongs to the phosphatidyl serine synthase family.

The protein localises to the endoplasmic reticulum membrane. It carries out the reaction a 1,2-diacyl-sn-glycero-3-phosphoethanolamine + L-serine = a 1,2-diacyl-sn-glycero-3-phospho-L-serine + ethanolamine. It catalyses the reaction a 1,2-diacyl-sn-glycero-3-phosphocholine + L-serine = a 1,2-diacyl-sn-glycero-3-phospho-L-serine + choline. It participates in phospholipid metabolism; phosphatidylserine biosynthesis. With respect to regulation, requires calcium ions. Inhibited by exogenous phosphatidylserine. Catalyzes a base-exchange reaction in which the polar head group of phosphatidylethanolamine (PE) or phosphatidylcholine (PC) is replaced by L-serine. Catalyzes mainly the conversion of phosphatidylcholine. Also converts, in vitro and to a lesser extent, phosphatidylethanolamine. The polypeptide is Phosphatidylserine synthase 1 (PTDSS1) (Homo sapiens (Human)).